The following is an 867-amino-acid chain: Bifunctional isopimaradiene synthase, chloroplastic (867 aa).

A chloroplast-targeting transit peptide spans 1–68; it reads MALLSSSLSS…VGEGTTSLPY (68 aa). K267 serves as a coordination point for substrate. Mg(2+) is bound by residues D400 and D402. The short motif at 400-403 is the DXDD motif element; the sequence is DIDD. K487 contacts substrate. Mg(2+) is bound by residues D619, D623, N763, T767, and E771. Positions 619-623 match the DDXXD motif motif; it reads DDLYD.

This sequence belongs to the terpene synthase family. Tpsd subfamily. It depends on Mg(2+) as a cofactor.

It localises to the plastid. The protein resides in the chloroplast. It catalyses the reaction (2E,6E,10E)-geranylgeranyl diphosphate = (+)-copalyl diphosphate. The catalysed reaction is (+)-copalyl diphosphate = isopimara-7,15-diene + diphosphate. Its pathway is terpene metabolism; oleoresin biosynthesis. In terms of biological role, involved in defensive oleoresin formation in conifers in response to insect attack or other injury. Involved in diterpene (C20) olefins biosynthesis. Bifunctional enzyme that catalyzes two sequential cyclizations of geranylgeranyl diphosphate (GGPP) to isopimara-7,15-diene. The sequence is that of Bifunctional isopimaradiene synthase, chloroplastic (TPS-ISO) from Picea abies (Norway spruce).